A 340-amino-acid chain; its full sequence is Cytosolic Fe-S cluster assembly factor NBP35 (340 aa).

Residues cysteine 31, cysteine 45, cysteine 48, and cysteine 54 each coordinate [4Fe-4S] cluster. Residue 84–91 participates in ATP binding; that stretch reads GKGGVGKS. [4Fe-4S] cluster is bound by residues cysteine 257 and cysteine 260.

This sequence belongs to the Mrp/NBP35 ATP-binding proteins family. NUBP1/NBP35 subfamily. In terms of assembly, heterotetramer of 2 NBP35 and 2 CFD1 chains. [4Fe-4S] cluster is required as a cofactor.

It localises to the cytoplasm. In terms of biological role, component of the cytosolic iron-sulfur (Fe/S) protein assembly (CIA) machinery. Required for maturation of extramitochondrial Fe-S proteins. The NBP35-CFD1 heterotetramer forms a Fe-S scaffold complex, mediating the de novo assembly of an Fe-S cluster and its transfer to target apoproteins. The polypeptide is Cytosolic Fe-S cluster assembly factor NBP35 (Phaeosphaeria nodorum (strain SN15 / ATCC MYA-4574 / FGSC 10173) (Glume blotch fungus)).